Here is a 553-residue protein sequence, read N- to C-terminus: Cytokine-like nuclear factor N-PAC (553 aa).

The PWWP domain occupies 8 to 66; it reads LGDLVWGKLGRYPPWPGKIVNPPKDLKKPRGKKCFFVKFFGTEDHAWIKVEQLKPYHAH. 2 stretches are compositionally biased toward basic and acidic residues: residues 92–145 and 162–182; these read RAKG…EGKK and RAQE…KDLT. The segment at 92-188 is disordered; that stretch reads RAKGKDQTSS…KDLTIPESST (97 aa). The residue at position 130 (Ser-130) is a Phosphoserine. Lys-135 participates in a covalent cross-link: Glycyl lysine isopeptide (Lys-Gly) (interchain with G-Cter in SUMO2). The residue at position 167 (Ser-167) is a Phosphoserine. The segment at residues 168–180 is a DNA-binding region (a.T hook); sequence PRKRGRPPKDEKD. Glycyl lysine isopeptide (Lys-Gly) (interchain with G-Cter in SUMO2) cross-links involve residues Lys-176, Lys-179, Lys-201, and Lys-211. The tract at residues 214 to 217 is interaction with histone H3; the sequence is DPHF. The tract at residues 216–225 is interaction with KDM1B; sequence HFHHFLLSQT. Residues Lys-227, Lys-237, Lys-240, and Lys-269 each participate in a glycyl lysine isopeptide (Lys-Gly) (interchain with G-Cter in SUMO2) cross-link. Residues 261 to 553 are dehydrogenase domain; that stretch reads GSITPTDKKI…MSAVYRAYIH (293 aa). An NAD(+)-binding site is contributed by 271–285; that stretch reads GFLGLGLMGSGIVSN. A Glycyl lysine isopeptide (Lys-Gly) (interchain with G-Cter in SUMO2) cross-link involves residue Lys-302. NAD(+)-binding residues include Thr-362 and Lys-505. Ser-540 is subject to Phosphoserine.

This sequence belongs to the HIBADH-related family. NP60 subfamily. Homotetramere. Interacts with MAPK14. Interacts with KDM1B at nucleosomes; this interaction stimulates H3K4me1 and H3K4me2 demethylation. Binds to mononucleosomes. Interacts with GATA4; the interaction is required for a synergistic activation of GATA4 target genes transcription.

The protein resides in the nucleus. It localises to the chromosome. In terms of biological role, cytokine-like nuclear factor with chromatin gene reader activity involved in chromatin modification and regulation of gene expression. Acts as a nucleosome-destabilizing factor that is recruited to genes during transcriptional activation. Recognizes and binds histone H3 without a preference for specific epigenetic markers and also binds DNA. Interacts with KDM1B and promotes its histone demethylase activity by facilitating the capture of H3 tails, they form a multifunctional enzyme complex that modifies transcribed chromatin and facilitates Pol II transcription through nucleosomes. Stimulates the acetylation of 'Lys-56' of nucleosomal histone H3 (H3K56ac) by EP300. With GATA4, co-binds a defined set of heart development genes and coregulates their expression during cardiomyocyte differentiation. Regulates p38 MAP kinase activity by mediating stress activation of MAPK14/p38alpha and specifically regulating MAPK14 signaling. Indirectly promotes phosphorylation of MAPK14 and activation of ATF2. The phosphorylation of MAPK14 requires upstream activity of MAP2K4 and MAP2K6. The sequence is that of Cytokine-like nuclear factor N-PAC (GLYR1) from Pongo abelii (Sumatran orangutan).